The sequence spans 322 residues: Aspartate carbamoyltransferase catalytic subunit (322 aa).

2 residues coordinate carbamoyl phosphate: Arg70 and Thr71. Lys98 is a binding site for L-aspartate. The carbamoyl phosphate site is built by Arg120, His150, and Gln153. Arg184 and Arg239 together coordinate L-aspartate. Carbamoyl phosphate contacts are provided by Gly280 and Pro281.

The protein belongs to the aspartate/ornithine carbamoyltransferase superfamily. ATCase family. As to quaternary structure, heterododecamer (2C3:3R2) of six catalytic PyrB chains organized as two trimers (C3), and six regulatory PyrI chains organized as three dimers (R2).

The enzyme catalyses carbamoyl phosphate + L-aspartate = N-carbamoyl-L-aspartate + phosphate + H(+). It participates in pyrimidine metabolism; UMP biosynthesis via de novo pathway; (S)-dihydroorotate from bicarbonate: step 2/3. Its function is as follows. Catalyzes the condensation of carbamoyl phosphate and aspartate to form carbamoyl aspartate and inorganic phosphate, the committed step in the de novo pyrimidine nucleotide biosynthesis pathway. In Xylella fastidiosa (strain 9a5c), this protein is Aspartate carbamoyltransferase catalytic subunit.